The chain runs to 101 residues: Urease subunit beta (101 aa).

It belongs to the urease beta subunit family. In terms of assembly, heterotrimer of UreA (gamma), UreB (beta) and UreC (alpha) subunits. Three heterotrimers associate to form the active enzyme.

Its subcellular location is the cytoplasm. The enzyme catalyses urea + 2 H2O + H(+) = hydrogencarbonate + 2 NH4(+). The protein operates within nitrogen metabolism; urea degradation; CO(2) and NH(3) from urea (urease route): step 1/1. The chain is Urease subunit beta from Paraburkholderia phytofirmans (strain DSM 17436 / LMG 22146 / PsJN) (Burkholderia phytofirmans).